We begin with the raw amino-acid sequence, 470 residues long: Probable E3 ubiquitin-protein ligase TRIML1 (470 aa).

An RING-type zinc finger spans residues 22–63 (CFICLDYFSSPVTTECGHSFCLMCLLKSWEEHNTPLSCPECW). 2 coiled-coil regions span residues 135 to 170 (SEAE…KERV) and 196 to 235 (KEEE…GKMI). The 198-residue stretch at 273–470 (TELSLCHITG…NTDPLIICHI (198 aa)) folds into the B30.2/SPRY domain.

In terms of assembly, interacts with USP5. In terms of tissue distribution, testis.

The catalysed reaction is S-ubiquitinyl-[E2 ubiquitin-conjugating enzyme]-L-cysteine + [acceptor protein]-L-lysine = [E2 ubiquitin-conjugating enzyme]-L-cysteine + N(6)-ubiquitinyl-[acceptor protein]-L-lysine.. It participates in protein modification; protein ubiquitination. In terms of biological role, probable E3 ubiquitin-protein ligase which plays an important role in blastocyst development. Involved in progression of blastocyst stage and subsequent embryo development. The sequence is that of Probable E3 ubiquitin-protein ligase TRIML1 (Triml1) from Mus musculus (Mouse).